The sequence spans 252 residues: 3-dehydroquinate dehydratase (252 aa).

Residues serine 21, glutamate 46 to arginine 48, and arginine 82 each bind 3-dehydroquinate. Catalysis depends on histidine 143, which acts as the Proton donor/acceptor. Lysine 170 (schiff-base intermediate with substrate) is an active-site residue. 3-dehydroquinate-binding residues include arginine 213, serine 232, and glutamine 236.

Belongs to the type-I 3-dehydroquinase family. In terms of assembly, homodimer.

The catalysed reaction is 3-dehydroquinate = 3-dehydroshikimate + H2O. It functions in the pathway metabolic intermediate biosynthesis; chorismate biosynthesis; chorismate from D-erythrose 4-phosphate and phosphoenolpyruvate: step 3/7. Functionally, involved in the third step of the chorismate pathway, which leads to the biosynthesis of aromatic amino acids. Catalyzes the cis-dehydration of 3-dehydroquinate (DHQ) and introduces the first double bond of the aromatic ring to yield 3-dehydroshikimate. This Shigella boydii serotype 4 (strain Sb227) protein is 3-dehydroquinate dehydratase.